A 418-amino-acid polypeptide reads, in one-letter code: UDP-N-acetylglucosamine 1-carboxyvinyltransferase (418 aa).

Residue 22 to 23 (KN) coordinates phosphoenolpyruvate. A UDP-N-acetyl-alpha-D-glucosamine-binding site is contributed by arginine 93. The Proton donor role is filled by cysteine 117. Position 117 is a 2-(S-cysteinyl)pyruvic acid O-phosphothioketal (cysteine 117). Residues 122-126 (RPIDL), aspartate 306, and leucine 328 each bind UDP-N-acetyl-alpha-D-glucosamine.

This sequence belongs to the EPSP synthase family. MurA subfamily.

The protein localises to the cytoplasm. The enzyme catalyses phosphoenolpyruvate + UDP-N-acetyl-alpha-D-glucosamine = UDP-N-acetyl-3-O-(1-carboxyvinyl)-alpha-D-glucosamine + phosphate. Its pathway is cell wall biogenesis; peptidoglycan biosynthesis. Its function is as follows. Cell wall formation. Adds enolpyruvyl to UDP-N-acetylglucosamine. In Campylobacter hominis (strain ATCC BAA-381 / DSM 21671 / CCUG 45161 / LMG 19568 / NCTC 13146 / CH001A), this protein is UDP-N-acetylglucosamine 1-carboxyvinyltransferase.